Reading from the N-terminus, the 207-residue chain is Gene 66 protein (207 aa).

This chain is Gene 66 protein (66), found in Mycobacterium (Mycobacteriophage L5).